The chain runs to 883 residues: Phosphoenolpyruvate carboxylase (883 aa).

Residues histidine 138 and lysine 546 contribute to the active site.

The protein belongs to the PEPCase type 1 family. It depends on Mg(2+) as a cofactor.

The enzyme catalyses oxaloacetate + phosphate = phosphoenolpyruvate + hydrogencarbonate. In terms of biological role, forms oxaloacetate, a four-carbon dicarboxylic acid source for the tricarboxylic acid cycle. The polypeptide is Phosphoenolpyruvate carboxylase (Erwinia tasmaniensis (strain DSM 17950 / CFBP 7177 / CIP 109463 / NCPPB 4357 / Et1/99)).